The chain runs to 265 residues: Undecaprenyl-diphosphatase (265 aa).

A run of 7 helical transmembrane segments spans residues 42 to 62, 82 to 102, 108 to 128, 157 to 177, 181 to 201, 217 to 237, and 244 to 264; these read AATF…VLYW, GIVL…LLHA, LFRP…MILV, LALW…MLLG, PLAA…ATGY, FFLV…KVFV, and TLIP…YFMV.

This sequence belongs to the UppP family.

The protein resides in the cell inner membrane. It carries out the reaction di-trans,octa-cis-undecaprenyl diphosphate + H2O = di-trans,octa-cis-undecaprenyl phosphate + phosphate + H(+). In terms of biological role, catalyzes the dephosphorylation of undecaprenyl diphosphate (UPP). Confers resistance to bacitracin. The chain is Undecaprenyl-diphosphatase from Desulfovibrio desulfuricans (strain ATCC 27774 / DSM 6949 / MB).